Reading from the N-terminus, the 564-residue chain is MFS-type transporter dmxR4 (564 aa).

The interval 1–61 (MSSERPDGSA…PAKEAPAKPA (61 aa)) is disordered. Positions 25–44 (TDSSRTSNDASQTSQDTAVQ) are enriched in polar residues. The segment covering 47 to 57 (PPKEAPAKEAP) has biased composition (basic and acidic residues). 5 helical membrane passes run 71–91 (IALL…DRSI), 106–126 (AGDI…FQLL), 138–158 (TVFV…GAAP), 169–189 (LAGI…VFLI), and 199–219 (GLFG…GGGF). An N-linked (GlcNAc...) asparagine glycan is attached at asparagine 222. 7 helical membrane passes run 227 to 247 (WCFY…ALWM), 265 to 285 (GLDL…LLAL), 299 to 319 (IIAL…LQAF), 348 to 368 (GVHL…GGFF), 376 to 396 (SPLA…IYTF), 405 to 425 (WIGS…APNL), and 438 to 458 (SALA…VSVG). An N-linked (GlcNAc...) asparagine glycan is attached at asparagine 469. 2 helical membrane-spanning segments follow: residues 470–490 (LSWI…VSFL) and 512–532 (VFMI…SMEW). The tract at residues 534-564 (SVKSRGSWDEKPAAKPTDKPTEEKKVPPEAV) is disordered. Residues 539–564 (GSWDEKPAAKPTDKPTEEKKVPPEAV) are compositionally biased toward basic and acidic residues.

It belongs to the major facilitator superfamily. TCR/Tet family.

The protein resides in the membrane. MFS-type transporter; part of the gene cluster that mediates the biosynthesis of the dimeric xanthones cryptosporioptides. The sequence is that of MFS-type transporter dmxR4 from Cryptosporiopsis sp. (strain 8999).